Here is an 89-residue protein sequence, read N- to C-terminus: MALDVQEKAQIVADYQQAVGDTGSPEVQVALLTHNINKLQGHFKANGKDHHSRRGLIRMVNQRRKLLDYLKGKDLGRYQTLIGRLGLRR.

This sequence belongs to the universal ribosomal protein uS15 family. In terms of assembly, part of the 30S ribosomal subunit. Forms a bridge to the 50S subunit in the 70S ribosome, contacting the 23S rRNA.

Its function is as follows. One of the primary rRNA binding proteins, it binds directly to 16S rRNA where it helps nucleate assembly of the platform of the 30S subunit by binding and bridging several RNA helices of the 16S rRNA. In terms of biological role, forms an intersubunit bridge (bridge B4) with the 23S rRNA of the 50S subunit in the ribosome. The chain is Small ribosomal subunit protein uS15 from Pseudomonas fluorescens (strain SBW25).